An 88-amino-acid polypeptide reads, in one-letter code: Putative transmembrane protein ORF24 (88 aa).

The next 3 helical transmembrane spans lie at 16-36 (LNMG…WAGM), 42-62 (AVFV…VTQF), and 64-84 (FIWF…VASI).

It localises to the host membrane. This is Putative transmembrane protein ORF24 from Haloarcula hispanica (His1V).